Consider the following 334-residue polypeptide: Putative peptide import ATP-binding protein BAB2_1053 (334 aa).

The ABC transporter domain occupies 22–272 (VRTDDLVRDF…PLHPYSRALL (251 aa)). 64-71 (GESGSGKS) serves as a coordination point for ATP.

The protein belongs to the ABC transporter superfamily. In terms of assembly, the complex is composed of two ATP-binding proteins (BAB2_1052 and BAB2_1053), two transmembrane proteins (BAB2_1050 and BAB2_1051) and a solute-binding protein (BAB2_1049).

Its subcellular location is the cell inner membrane. Its function is as follows. Probably part of an ABC transporter complex that could be involved in peptide import. Probably responsible for energy coupling to the transport system. The chain is Putative peptide import ATP-binding protein BAB2_1053 from Brucella abortus (strain 2308).